The following is a 259-amino-acid chain: uncharacterized protein (259 aa).

An ABC transporter domain is found at 4–243 (INLKNINLTR…KILTDFYQEK (240 aa)). 36-43 (GLNGSGKS) is an ATP binding site.

This sequence belongs to the ABC transporter superfamily.

This is an uncharacterized protein from Lactococcus lactis subsp. lactis (strain IL1403) (Streptococcus lactis).